Consider the following 103-residue polypeptide: uncharacterized protein (103 aa).

Transmembrane regions (helical) follow at residues 1–21, 29–49, and 69–89; these read MPGV…VFLS, IAFI…TGYF, and VVEW…GLLF.

It is found in the cell membrane. This is an uncharacterized protein from Methanocaldococcus jannaschii (strain ATCC 43067 / DSM 2661 / JAL-1 / JCM 10045 / NBRC 100440) (Methanococcus jannaschii).